We begin with the raw amino-acid sequence, 27 residues long: uncharacterized protein (27 aa).

It localises to the plastid. It is found in the chloroplast. This is an uncharacterized protein from Trieres chinensis (Marine centric diatom).